We begin with the raw amino-acid sequence, 227 residues long: tRNA (guanine-N(7)-)-methyltransferase (227 aa).

The tract at residues 1 to 21 (MPDMTMKSQPDRLYGRQRGHA) is disordered. S-adenosyl-L-methionine is bound by residues glutamate 54, glutamate 79, aspartate 114, and aspartate 136. The active site involves aspartate 136. Substrate is bound by residues lysine 140, aspartate 172, and 206–209 (TRYE).

Belongs to the class I-like SAM-binding methyltransferase superfamily. TrmB family.

It catalyses the reaction guanosine(46) in tRNA + S-adenosyl-L-methionine = N(7)-methylguanosine(46) in tRNA + S-adenosyl-L-homocysteine. It participates in tRNA modification; N(7)-methylguanine-tRNA biosynthesis. Functionally, catalyzes the formation of N(7)-methylguanine at position 46 (m7G46) in tRNA. This Granulibacter bethesdensis (strain ATCC BAA-1260 / CGDNIH1) protein is tRNA (guanine-N(7)-)-methyltransferase.